We begin with the raw amino-acid sequence, 413 residues long: Exodeoxyribonuclease I (413 aa).

One can recognise an Exonuclease domain in the interval 12–193; the sequence is LFYDYETFGI…VSDVYATIEI (182 aa). The Mg(2+) site is built by Asp-15, Glu-17, and Asp-186. Glu-17 contacts substrate. The 148-residue stretch at 202–349 folds into the ExoI SH3-like domain; sequence PRLFDFFFKI…QNIKIIFSKN (148 aa). Residues 350–413 form the ExoI C-terminal domain; sequence NNTNQFFNVD…RYRARNFFIH (64 aa).

Monomer. Interacts with ssb (via C-terminus); this interaction stimulates the exonuclease activity by recruiting the enzyme to its substrate. Mg(2+) is required as a cofactor.

The enzyme catalyses Exonucleolytic cleavage in the 3'- to 5'-direction to yield nucleoside 5'-phosphates.. In terms of biological role, degrades single-stranded DNA (ssDNA) in a highly processive manner. Also functions as a DNA deoxyribophosphodiesterase that releases deoxyribose-phosphate moieties following the cleavage of DNA at an apurinic/apyrimidinic (AP) site by either an AP endonuclease or AP lyase. This chain is Exodeoxyribonuclease I (sbcB), found in Buchnera aphidicola subsp. Acyrthosiphon pisum (strain APS) (Acyrthosiphon pisum symbiotic bacterium).